The primary structure comprises 680 residues: MIDRYKHQQLRIGLVSPQQISAWATKIIPNGEIVGEVTKPYTFHYKTNKPEKDGLFCERIFGPIKSGICACGNYRVIGDEKDDPKFCEQCGVEFVDSRIRRYQMGYIKLTCPVTHVWYLKRLPSYIANLLDKPLKELEGLVYCDFSFARPITKKPTFLRLRGSFEYEIQSWKYSIPLFFTTQGFDIFRNREISTGAGAIREQLADLDLRIIIENSLVEWKQLGEEGPTGNEWEDRKIVRRKDFLVRRMELAKHFIRTNIEPEWMVLCLLPVLPPELRPIIQIEGGKLMSSDINELYRRVIYRNNTLTDLLTTSRSTPGELVMCQEKLVQEAVDTLLDNGIRGQPMRDGHNKVYKSFSDVIEGKEGRFRETLLGKRVDYSGRSVIVVGPSLSLHRCGLPREIAIELFQTFVIRGLIRQHLASNIGVAKSQIREKKPIVWEILQEVMQGHPVLLNRAPTLHRLGIQSFQPILVEGRTICLHPLVCKGFNADFDGDQMAVHVPLSLEAQAEARLLMFSHMNLLSPAIGDPISVPTQDMLIGLYVLTSGTRRGICANRYNPCNQKNYQNERIYETNYKYTKEPFFCNSYDAIGAYRQKRINLDSPLWLRWQLDQRVIASREVPIEVHYESFGNYHEIYAHYLIVRSVKKETFCIYIRTTVGHISFYREIEEAIQGFSQACSYDT.

Zn(2+) is bound by residues cysteine 69, cysteine 71, cysteine 87, and cysteine 90. The Mg(2+) site is built by aspartate 489, aspartate 491, and aspartate 493.

Belongs to the RNA polymerase beta' chain family. RpoC1 subfamily. In plastids the minimal PEP RNA polymerase catalytic core is composed of four subunits: alpha, beta, beta', and beta''. When a (nuclear-encoded) sigma factor is associated with the core the holoenzyme is formed, which can initiate transcription. Requires Mg(2+) as cofactor. Zn(2+) is required as a cofactor.

It localises to the plastid. It is found in the chloroplast. The enzyme catalyses RNA(n) + a ribonucleoside 5'-triphosphate = RNA(n+1) + diphosphate. In terms of biological role, DNA-dependent RNA polymerase catalyzes the transcription of DNA into RNA using the four ribonucleoside triphosphates as substrates. This Barbarea verna (Land cress) protein is DNA-directed RNA polymerase subunit beta'.